We begin with the raw amino-acid sequence, 166 residues long: Putative esterase sll0410 (166 aa).

D45 is a catalytic residue.

It belongs to the 4-hydroxybenzoyl-CoA thioesterase family.

This Synechocystis sp. (strain ATCC 27184 / PCC 6803 / Kazusa) protein is Putative esterase sll0410.